Reading from the N-terminus, the 1183-residue chain is RecQ-like DNA helicase BLM (1183 aa).

Residues 1 to 109 (MEEARAATNG…AAEQDSSAEH (109 aa)) are disordered. Over residues 14-27 (ESQKLSNGEKSSQL) the composition is skewed to polar residues. The span at 38 to 48 (ADIELEEDDYL) shows a compositional bias: acidic residues. The segment at 110–162 (ADKGLHLEQQLYSVMEDICKLVDAIPLHELTSISCAKELLQQRELRRKLLADS) is necessary for dimerization and homooligomerization. Disordered regions lie at residues 164–215 (ALNT…LPSV), 260–323 (PKVN…GCWD), and 381–408 (GSAP…PLVH). 2 stretches are compositionally biased toward polar residues: residues 206-215 (TPKSTNLPSV) and 265-280 (KGST…SFNG). ATP is bound by residues 439-443 (FRTNQ) and 463-467 (GGGKS). Residues 447-622 (INAALLGEDC…QNQLEMLKPQ (176 aa)) form the Helicase ATP-binding domain. Residues 566 to 569 (DEAH) carry the DEAH box motif. 3' overhang DNA-binding stretches follow at residues 641-644 (KPKK) and 668-670 (SRH). Positions 648–795 (DCLEWIKKYH…TRQTHFNNLY (148 aa)) constitute a Helicase C-terminal domain. Residue Arg-753 participates in ATP binding. The 3' overhang DNA-binding stretch occupies residues 771 to 774 (RLRR). Zn(2+) contacts are provided by Cys-807, Cys-826, Cys-834, and Cys-837. Residues 865 to 910 (QVGGINGNRNTGSGRYTLNMMVDIFLGAKSAKIQSGIFGKGAAYSR) are DNA Holliday junction binding. 3' overhang DNA-binding stretches follow at residues 881–883 (TLN), 892–896 (AKSAK), and 931–937 (YITANDQ). The HRDC domain maps to 983–1063 (EEMVKKCLGE…DKYSEWTTPE (81 aa)). The tract at residues 998–1015 (KTLGKIFDVHYFNIFSTS) is necessary for ssDNA and DNA Holliday junction binding. The disordered stretch occupies residues 1068-1183 (QSVDTAPGSA…HFLQPSYAVL (116 aa)). Positions 1091–1101 (VTSSYFGGNAN) are enriched in polar residues. Positions 1104–1120 (RKRKRLPNSGESKRKKT) match the Nuclear localization signal motif. Residues 1133 to 1142 (ARYRRARRAP) show a composition bias toward basic residues. Over residues 1143–1158 (GSRAAAPAQSSALRGA) the composition is skewed to low complexity.

Belongs to the helicase family. RecQ subfamily. Monomer. Homodimer (via N-terminus). Homotetramer (via N-terminus); dimer of dimers. Homohexamer (via N-terminus). Self-association negatively regulates DNA unwinding amplitude and rate. Oligomer complexes dissociate into monomer in presence of ATP. The cofactor is Zn(2+).

The protein localises to the nucleus. It carries out the reaction Couples ATP hydrolysis with the unwinding of duplex DNA by translocating in the 3'-5' direction.. It catalyses the reaction ATP + H2O = ADP + phosphate + H(+). Its function is as follows. ATP-dependent DNA helicase that unwinds single- and double-stranded DNA in a 3'-5' direction. Participates in DNA replication and repair. Involved in 5'-end resection of DNA during double-strand break (DSB) repair. Negatively regulates sister chromatid exchange (SCE). Stimulates DNA 4-way junction branch migration and DNA Holliday junction dissolution. Binds DNA. Binds single-stranded DNA (ssDNA), forked duplex DNA and DNA Holliday junction. The protein is RecQ-like DNA helicase BLM (BLM) of Gallus gallus (Chicken).